Reading from the N-terminus, the 423-residue chain is Calcium up-regulated protein A (423 aa).

Residues Met1–Leu19 are compositionally biased toward basic and acidic residues. The tract at residues Met1 to Lys27 is disordered. 2 Ricin B-type lectin domains span residues Lys27–Phe147 and Gln118–Asn251.

Belongs to the cup family.

It is found in the cytoplasm. The protein resides in the membrane. Functionally, may play an important role in stabilizing and/or regulating the cell membrane during Ca(2+) stress or certain stages of development. This is Calcium up-regulated protein A (cupA) from Dictyostelium discoideum (Social amoeba).